The sequence spans 382 residues: Apolipoprotein A-IV (382 aa).

The signal sequence occupies residues 1-20; it reads MFLKAVVLTLSLVAVTGAQA. 13 consecutive repeat copies span residues 33 to 54, 60 to 81, 82 to 103, 115 to 136, 137 to 158, 159 to 180, 181 to 202, 203 to 224, 225 to 246, 247 to 268, 269 to 286, 287 to 308, and 309 to 330. Residues 33 to 330 are 13 X 22 AA approximate tandem repeats; that stretch reads DYFSQLSNNA…QVEELRQKLG (298 aa).

Belongs to the apolipoprotein A1/A4/E family. In terms of assembly, homodimer. In terms of processing, phosphorylation sites are present in the extracellular medium.

Its subcellular location is the secreted. May have a role in chylomicrons and VLDL secretion and catabolism. Required for efficient activation of lipoprotein lipase by ApoC-II; potent activator of LCAT. Apoa-IV is a major component of HDL and chylomicrons. This Neomonachus schauinslandi (Hawaiian monk seal) protein is Apolipoprotein A-IV (APOA4).